A 493-amino-acid polypeptide reads, in one-letter code: Sulfoacetaldehyde dehydrogenase (acylating) (493 aa).

Over residues 1–10 (MSVQILHRRQ) the composition is skewed to basic residues. A disordered region spans residues 1–21 (MSVQILHRRQSNNSDLPLPTA). The Nucleophile role is filled by C273.

This sequence belongs to the aldehyde dehydrogenase family. In terms of assembly, homodimer.

It localises to the cytoplasm. The catalysed reaction is sulfoacetaldehyde + NADP(+) + CoA = sulfoacetyl-CoA + NADPH + H(+). Involved in the degradation of sulfoacetate, a widespread natural product. Catalyzes the conversion of sulfoacetyl-CoA and NADPH to sulfoacetaldehyde, CoA and NADP(+). Specific for NADP(+) and sulfoacetaldehyde. This is Sulfoacetaldehyde dehydrogenase (acylating) from Cupriavidus necator (strain ATCC 17699 / DSM 428 / KCTC 22496 / NCIMB 10442 / H16 / Stanier 337) (Ralstonia eutropha).